Consider the following 366-residue polypeptide: Galactoside alpha-(1,2)-fucosyltransferase 1 (366 aa).

The Cytoplasmic segment spans residues 1-8 (MWPLSHRH). Residues 9–25 (LCLAFLLVCVLSAISFF) traverse the membrane as a helical; Signal-anchor for type II membrane protein segment. Residues 26 to 366 (LHVHQDSFRH…LSPLWTLAEP (341 aa)) are Lumenal-facing. Asn-66, Asn-302, and Asn-328 each carry an N-linked (GlcNAc...) asparagine glycan.

Belongs to the glycosyltransferase 11 family.

It localises to the golgi apparatus. Its subcellular location is the golgi stack membrane. It catalyses the reaction a beta-D-galactosyl-(1-&gt;4)-N-acetyl-beta-D-glucosaminyl derivative + GDP-beta-L-fucose = an alpha-L-Fuc-(1-&gt;2)-beta-D-Gal-(1-&gt;4)-beta-D-GlcNAc derivative + GDP + H(+). The enzyme catalyses a ganglioside GA1 + GDP-beta-L-fucose = a ganglioside Fuc-GA1 + GDP + H(+). The catalysed reaction is a beta-D-Gal-(1-&gt;3)-beta-D-GlcNAc-(1-&gt;3)-beta-D-Gal-(1-&gt;4)-beta-D-Glc-(1&lt;-&gt;1')-Cer(d18:1(4E)) + GDP-beta-L-fucose = alpha-L-fucosyl-(1-&gt;2)- beta-D-galactosyl-(1-&gt;3)-N-acetyl-beta-D-glucosaminyl-(1-&gt;3)-beta-D-galactosyl-(1-&gt;4)-beta-D-glucosyl-(1&lt;-&gt;1')-N-acylsphing-4-enine + GDP + H(+). It carries out the reaction a neolactoside nLc4Cer(d18:1(4E)) + GDP-beta-L-fucose = a neolactoside IV(2)-alpha-Fuc-nLc4Cer(d18:1(4E)) + GDP + H(+). It catalyses the reaction a ganglioside GM1 + GDP-beta-L-fucose = a ganglioside Fuc-GM1 + GDP + H(+). The enzyme catalyses beta-D-galactosyl-(1-&gt;3)-N-acetyl-D-galactosamine + GDP-beta-L-fucose = alpha-L-fucosyl-(1-&gt;2)-beta-D-galactosyl-(1-&gt;3)-N-acetyl-D-galactosamine + GDP + H(+). The protein operates within protein modification; protein glycosylation. Catalyzes the transfer of L-fucose, from a guanosine diphosphate-beta-L-fucose, to the terminal galactose residue of glycoconjugates through an alpha(1,2) linkage leading to H antigen synthesis that is an intermediate substrate in the synthesis of ABO blood group antigens. H antigen is essential for maturation of the glomerular layer of the main olfactory bulb, in cell migration and early cell-cell contacts during tumor associated angiogenesis. Preferentially fucosylates soluble lactose and to a lesser extent fucosylates glycolipids gangliosides GA1 and GM1a. This is Galactoside alpha-(1,2)-fucosyltransferase 1 from Alouatta belzebul (Red-handed howler monkey).